Here is a 511-residue protein sequence, read N- to C-terminus: Probable cytochrome P450 4d21 (511 aa).

Cys456 contributes to the heme binding site.

The protein belongs to the cytochrome P450 family. Heme serves as cofactor.

The protein localises to the endoplasmic reticulum membrane. It is found in the microsome membrane. Its function is as follows. May be involved in the metabolism of insect hormones and in the breakdown of synthetic insecticides. In Drosophila melanogaster (Fruit fly), this protein is Probable cytochrome P450 4d21 (Cyp4d21).